Reading from the N-terminus, the 388-residue chain is 3-sulfinopropanoyl-CoA desulfinase (388 aa).

FAD contacts are provided by residues 121–124 (ICIT), Ser130, and 153–156 (HWIT). Residue 240 to 241 (YN) participates in substrate binding. FAD contacts are provided by residues Arg269, Gln336, 363-367 (GGTAQ), and Gln384.

It belongs to the acyl-CoA dehydrogenase family. Homotrimer or homotetramer. FAD serves as cofactor.

It carries out the reaction 3-sulfinopropanoyl-CoA + H2O = propanoyl-CoA + sulfite + H(+). In terms of biological role, catalyzes the conversion 3-sulfinopropanoyl-CoA (3SP-CoA) to propanoyl-CoA by abstraction of sulfite. Does not show dehydrogenase activity. This Paraburkholderia xenovorans (strain LB400) protein is 3-sulfinopropanoyl-CoA desulfinase.